The primary structure comprises 580 residues: Arginine--tRNA ligase (580 aa).

A 'HIGH' region motif is present at residues 131-141 (ANPTGPMHVGH).

The protein belongs to the class-I aminoacyl-tRNA synthetase family. As to quaternary structure, monomer.

The protein localises to the cytoplasm. The enzyme catalyses tRNA(Arg) + L-arginine + ATP = L-arginyl-tRNA(Arg) + AMP + diphosphate. The chain is Arginine--tRNA ligase from Cereibacter sphaeroides (strain ATCC 17025 / ATH 2.4.3) (Rhodobacter sphaeroides).